A 1379-amino-acid polypeptide reads, in one-letter code: DNA-directed RNA polymerase subunit beta (1379 aa).

It belongs to the RNA polymerase beta chain family. The RNAP catalytic core consists of 2 alpha, 1 beta, 1 beta' and 1 omega subunit. When a sigma factor is associated with the core the holoenzyme is formed, which can initiate transcription.

It carries out the reaction RNA(n) + a ribonucleoside 5'-triphosphate = RNA(n+1) + diphosphate. Functionally, DNA-dependent RNA polymerase catalyzes the transcription of DNA into RNA using the four ribonucleoside triphosphates as substrates. This chain is DNA-directed RNA polymerase subunit beta, found in Campylobacter fetus subsp. fetus (strain 82-40).